Reading from the N-terminus, the 174-residue chain is Photosystem II repair protein PSB27-H1, chloroplastic (174 aa).

Residues 1-35 (MASASATATLLKPNLPPHKPTIIASSVSPPLPPPR) are disordered. T94 carries the post-translational modification Phosphothreonine. Residue Y132 is modified to Phosphotyrosine.

This sequence belongs to the Psb27 family.

The protein localises to the plastid. It localises to the chloroplast thylakoid membrane. Its function is as follows. Probably involved in repair of photodamaged photosystem II (PSII). The polypeptide is Photosystem II repair protein PSB27-H1, chloroplastic (PSB27-1) (Arabidopsis thaliana (Mouse-ear cress)).